Reading from the N-terminus, the 860-residue chain is Leucine--tRNA ligase (860 aa).

Residues Pro42–His52 carry the 'HIGH' region motif. Residues Lys619 to Ser623 carry the 'KMSKS' region motif. Lys622 lines the ATP pocket.

It belongs to the class-I aminoacyl-tRNA synthetase family.

It localises to the cytoplasm. The catalysed reaction is tRNA(Leu) + L-leucine + ATP = L-leucyl-tRNA(Leu) + AMP + diphosphate. The chain is Leucine--tRNA ligase from Salmonella enteritidis PT4 (strain P125109).